The following is a 1154-amino-acid chain: Spike glycoprotein (1154 aa).

The N-terminal stretch at 1-18 (MLERSLLLATLLSALCSA) is a signal peptide. Over 19–1096 (NLFGNNSYVY…LKTYIKWPWY (1078 aa)) the chain is Extracellular. Residues Asn-23, Asn-74, Asn-102, Asn-139, Asn-145, Asn-164, Asn-179, Asn-213, Asn-238, Asn-248, Asn-265, Asn-272, Asn-277, Asn-307, Asn-426, Asn-448, Asn-514, Asn-531, Asn-543, Asn-580, Asn-592, Asn-670, and Asn-677 are each glycosylated (N-linked (GlcNAc...) asparagine; by host). Residues 770–875 (IPFATQLQAR…QVDRIITGRL (106 aa)) are heptad repeat 1 (HR1). A coiled-coil region spans residues 823–867 (QDVVNKQSSILTETMASLNKNFGAISSVLQDIYQQLDSIQADAQV). N-linked (GlcNAc...) asparagine; by host glycosylation is found at Asn-948, Asn-961, Asn-980, Asn-1015, Asn-1039, Asn-1052, and Asn-1075. Positions 1025-1106 (NDDFDFDDEL…VWLAIAFATI (82 aa)) are heptad repeat 2 (HR2). A coiled-coil region spans residues 1056–1084 (PILDIGSEIDRIQGVIQGLNDSLIDLETL). Residues 1097 to 1117 (VWLAIAFATIIFILILGWLFF) form a helical membrane-spanning segment. Topologically, residues 1118 to 1154 (MTGCCGCCCGCFGIIPLMSKCGKKSSYYTTFDNDVVT) are cytoplasmic.

Belongs to the gammacoronaviruses spike protein family. Homotrimer; each monomer consists of a S1 and a S2 subunit. The resulting peplomers protrude from the virus surface as spikes. Post-translationally, specific enzymatic cleavages in vivo yield mature proteins. The precursor is processed into S1 and S2 by host cell furin or furin-like protease to yield the mature S1 and S2 proteins. The cleavage site between S1 and S2 requires the optimal sequence [KR]-X-[KR]-R. Additionally, a second cleavage leads to the release of a fusion peptide after viral attachment to host cell receptor.

The protein localises to the virion membrane. Its subcellular location is the host endoplasmic reticulum-Golgi intermediate compartment membrane. Attaches the virion to the host cell membrane by interacting with sialic acids, initiating the infection. Its function is as follows. Mediates fusion of the virion and cellular membranes by acting as a class I viral fusion protein. Under the current model, the protein has at least 3 conformational states: pre-fusion native state, pre-hairpin intermediate state, and post-fusion hairpin state. During viral and target cell membrane fusion, the coiled coil regions (heptad repeats) assume a trimer-of-hairpins structure, positioning the fusion peptide in close proximity to the C-terminal region of the ectodomain. The formation of this structure appears to drive apposition and subsequent fusion of viral and target cell membranes. In terms of biological role, acts as a viral fusion peptide after S2 cleavage occurring upon virus endocytosis. The polypeptide is Spike glycoprotein (Gallus gallus (Chicken)).